A 339-amino-acid polypeptide reads, in one-letter code: Lipoyl synthase (339 aa).

The segment at arginine 13–isoleucine 35 is disordered. The [4Fe-4S] cluster site is built by cysteine 68, cysteine 73, cysteine 79, cysteine 94, cysteine 98, cysteine 101, and serine 307. A Radical SAM core domain is found at tryptophan 80 to leucine 296.

The protein belongs to the radical SAM superfamily. Lipoyl synthase family. [4Fe-4S] cluster is required as a cofactor.

The protein localises to the cytoplasm. The enzyme catalyses [[Fe-S] cluster scaffold protein carrying a second [4Fe-4S](2+) cluster] + N(6)-octanoyl-L-lysyl-[protein] + 2 oxidized [2Fe-2S]-[ferredoxin] + 2 S-adenosyl-L-methionine + 4 H(+) = [[Fe-S] cluster scaffold protein] + N(6)-[(R)-dihydrolipoyl]-L-lysyl-[protein] + 4 Fe(3+) + 2 hydrogen sulfide + 2 5'-deoxyadenosine + 2 L-methionine + 2 reduced [2Fe-2S]-[ferredoxin]. The protein operates within protein modification; protein lipoylation via endogenous pathway; protein N(6)-(lipoyl)lysine from octanoyl-[acyl-carrier-protein]: step 2/2. In terms of biological role, catalyzes the radical-mediated insertion of two sulfur atoms into the C-6 and C-8 positions of the octanoyl moiety bound to the lipoyl domains of lipoate-dependent enzymes, thereby converting the octanoylated domains into lipoylated derivatives. The sequence is that of Lipoyl synthase from Methylorubrum extorquens (strain PA1) (Methylobacterium extorquens).